The following is a 162-amino-acid chain: Glutathione peroxidase-like peroxiredoxin GPX5 (162 aa).

S-selanylcysteine is present on C38. The active site involves N87.

This sequence belongs to the glutathione peroxidase family. In terms of processing, cys-87 is S-selanylated when selenium levels are high. S-selanylation may increase or be important for glutathione peroxidase activity.

The protein localises to the cytoplasm. It carries out the reaction 2 glutathione + H2O2 = glutathione disulfide + 2 H2O. It catalyses the reaction a hydroperoxide + [thioredoxin]-dithiol = an alcohol + [thioredoxin]-disulfide + H2O. Its function is as follows. Has thioredoxin peroxidase activity. May also have glutathione peroxidase activity, although this activity is controversial. Protects cells against reactive oxygen species, which may include photooxidative stress, hydrogen peroxide and organic hydroperoxides. This chain is Glutathione peroxidase-like peroxiredoxin GPX5, found in Chlamydomonas reinhardtii (Chlamydomonas smithii).